The following is a 147-amino-acid chain: Large ribosomal subunit protein uL15 (147 aa).

Positions 1–13 (MELHSLKAAEGSR) are enriched in basic and acidic residues. Positions 1-57 (MELHSLKAAEGSRKVRNRVGRGTSSGNGKTSGRGQKGQKSRSGGGVRPGFEGGQTEL) are disordered. 2 stretches are compositionally biased toward gly residues: residues 23-35 (TSSG…GRGQ) and 42-52 (SGGGVRPGFEG).

Belongs to the universal ribosomal protein uL15 family. As to quaternary structure, part of the 50S ribosomal subunit.

Its function is as follows. Binds to the 23S rRNA. The sequence is that of Large ribosomal subunit protein uL15 from Lactococcus lactis subsp. lactis (strain IL1403) (Streptococcus lactis).